The primary structure comprises 377 residues: Nitric oxide reductase FlRd-NAD(+) reductase (377 aa).

This sequence belongs to the FAD-dependent oxidoreductase family. Requires FAD as cofactor.

It localises to the cytoplasm. The enzyme catalyses 2 reduced [nitric oxide reductase rubredoxin domain] + NAD(+) + H(+) = 2 oxidized [nitric oxide reductase rubredoxin domain] + NADH. It functions in the pathway nitrogen metabolism; nitric oxide reduction. Functionally, one of at least two accessory proteins for anaerobic nitric oxide (NO) reductase. Reduces the rubredoxin moiety of NO reductase. This is Nitric oxide reductase FlRd-NAD(+) reductase from Salmonella typhi.